The primary structure comprises 354 residues: Guanine nucleotide-binding protein G(t) subunit alpha-3 (354 aa).

The tract at residues 1–27 (MGSGISSESKESAKRSKELEKKLQEDA) is disordered. Glycine 2 is lipidated: N-myristoyl glycine. Over residues 8–27 (ESKESAKRSKELEKKLQEDA) the composition is skewed to basic and acidic residues. Residues 32 to 354 (RTVKLLLLGA…KENLKDCGLF (323 aa)) form the G-alpha domain. Residues 35–48 (KLLLLGAGESGKST) are G1 motif. Residues 40–47 (GAGESGKS), 175–181 (LHSRVKT), 200–204 (DVGGQ), 269–272 (NKKD), and alanine 326 contribute to the GTP site. Positions 47 and 181 each coordinate Mg(2+). Residues 173–181 (DVLHSRVKT) form a G2 motif region. Residues 196-205 (FRMFDVGGQR) are G3 motif. Positions 265-272 (VLFLNKKD) are G4 motif. The interval 324–329 (TCATDT) is G5 motif.

This sequence belongs to the G-alpha family. G(i/o/t/z) subfamily. In terms of assembly, g proteins are composed of 3 units; alpha, beta and gamma, respectively GNAT3, GNB1 and GNG13 for Gustducin heterotrimer for bitter taste transduction. The alpha chain contains the guanine nucleotide binding site. Component of the TAS2R14-GNAT3 complex, consisting of TAS2R14, GNAT3, GNB1 and GNG2; within the complex interacts with TAS2R14; this complex plays a role in the perception of bitterness. Gustducin heterotrimer may also be composed of GNAT3, GNB3 and GNG13. Post-translationally, potential N-myristoylation may anchor alpha-subunit to the inner surface of plasma membrane. As to expression, expressed in taste buds (sensory organs of clustered epithelial cells) of the circumvallate, foliate and fungiform papillae of the tongue, as well as in nasoincisor, palatal and epiglottal taste buds at protein level. Expressed in enteroendocrine of the gut, in the lumenal pole of a subset of brush cells lining the stomach and the intestine at protein level. Detected in solitary cells throughout the respiratory track. Expressed also in spermatozoa.

It localises to the cytoplasm. Functionally, guanine nucleotide-binding protein (G protein) alpha subunit playing a prominent role in bitter and sweet taste transduction as well as in umami (monosodium glutamate, monopotassium glutamate, and inosine monophosphate) taste transduction. Transduction by this alpha subunit involves coupling of specific cell-surface receptors with a cGMP-phosphodiesterase; Activation of phosphodiesterase lowers intracellular levels of cAMP and cGMP which may open a cyclic nucleotide-suppressible cation channel leading to influx of calcium, ultimately leading to release of neurotransmitter. Indeed, denatonium and strychnine induce transient reduction in cAMP and cGMP in taste tissue, whereas this decrease is inhibited by GNAT3 antibody. Gustducin heterotrimer transduces response to bitter and sweet compounds via regulation of phosphodiesterase for alpha subunit, as well as via activation of phospholipase C for beta and gamma subunits, with ultimate increase inositol trisphosphate and increase of intracellular Calcium. GNAT3 can functionally couple to taste receptors to transmit intracellular signal: receptor heterodimer TAS1R2/TAS1R3 senses sweetness and TAS1R1/TAS1R3 transduces umami taste, whereas the T2R family GPCRs act as bitter sensors. Also functions as lumenal sugar sensors in the gut to control the expression of the Na+-glucose transporter SGLT1 in response to dietaty sugar, as well as the secretion of Glucagon-like peptide-1, GLP-1 and glucose-dependent insulinotropic polypeptide, GIP. Thus, may modulate the gut capacity to absorb sugars, with implications for the prevention and treatment of malabsorption syndromes and diet-related disorders including diabetes and obesity. This Rattus norvegicus (Rat) protein is Guanine nucleotide-binding protein G(t) subunit alpha-3 (Gnat3).